The following is a 354-amino-acid chain: Type II methylase M.HgiDII (354 aa).

One can recognise an SAM-dependent MTase C5-type domain in the interval 3–344 (GAVIDLFCGV…KSIKRFLEGL (342 aa)). C79 is a catalytic residue.

This sequence belongs to the class I-like SAM-binding methyltransferase superfamily. C5-methyltransferase family.

The enzyme catalyses a 2'-deoxycytidine in DNA + S-adenosyl-L-methionine = a 5-methyl-2'-deoxycytidine in DNA + S-adenosyl-L-homocysteine + H(+). Its function is as follows. A methylase that recognizes the double-stranded sequence 5'-GTCGAC-3', methylates C-? on both strands and protects the DNA from cleavage by the HgiDII endonuclease. This chain is Type II methylase M.HgiDII, found in Herpetosiphon aurantiacus (Herpetosiphon giganteus).